The sequence spans 121 residues: Large ribosomal subunit protein uL22 (121 aa).

The protein belongs to the universal ribosomal protein uL22 family. Part of the 50S ribosomal subunit.

Functionally, this protein binds specifically to 23S rRNA; its binding is stimulated by other ribosomal proteins, e.g. L4, L17, and L20. It is important during the early stages of 50S assembly. It makes multiple contacts with different domains of the 23S rRNA in the assembled 50S subunit and ribosome. The globular domain of the protein is located near the polypeptide exit tunnel on the outside of the subunit, while an extended beta-hairpin is found that lines the wall of the exit tunnel in the center of the 70S ribosome. The chain is Large ribosomal subunit protein uL22 from Arthrobacter sp. (strain FB24).